A 160-amino-acid polypeptide reads, in one-letter code: S-adenosylmethionine decarboxylase proenzyme (160 aa).

The active-site Schiff-base intermediate with substrate; via pyruvic acid is the Ser-73. Ser-73 carries the pyruvic acid (Ser); by autocatalysis modification. His-78 (proton acceptor; for processing activity) is an active-site residue. The active-site Proton donor; for catalytic activity is Cys-93.

The protein belongs to the prokaryotic AdoMetDC family. Type 1 subfamily. In terms of assembly, heterotetramer of two alpha and two beta chains arranged as a dimer of alpha/beta heterodimers. The cofactor is pyruvate. In terms of processing, is synthesized initially as an inactive proenzyme. Formation of the active enzyme involves a self-maturation process in which the active site pyruvoyl group is generated from an internal serine residue via an autocatalytic post-translational modification. Two non-identical subunits are generated from the proenzyme in this reaction, and the pyruvate is formed at the N-terminus of the alpha chain, which is derived from the carboxyl end of the proenzyme. The post-translation cleavage follows an unusual pathway, termed non-hydrolytic serinolysis, in which the side chain hydroxyl group of the serine supplies its oxygen atom to form the C-terminus of the beta chain, while the remainder of the serine residue undergoes an oxidative deamination to produce ammonia and the pyruvoyl group blocking the N-terminus of the alpha chain.

The enzyme catalyses S-adenosyl-L-methionine + H(+) = S-adenosyl 3-(methylsulfanyl)propylamine + CO2. It participates in amine and polyamine biosynthesis; S-adenosylmethioninamine biosynthesis; S-adenosylmethioninamine from S-adenosyl-L-methionine: step 1/1. Functionally, catalyzes the decarboxylation of S-adenosylmethionine to S-adenosylmethioninamine (dcAdoMet), the propylamine donor required for the synthesis of the polyamines spermine and spermidine from the diamine putrescine. This is S-adenosylmethionine decarboxylase proenzyme from Pseudomonas paraeruginosa (strain DSM 24068 / PA7) (Pseudomonas aeruginosa (strain PA7)).